Consider the following 195-residue polypeptide: dITP/XTP pyrophosphatase (195 aa).

8 to 13 (SNNQGK) serves as a coordination point for substrate. Positions 39 and 68 each coordinate Mg(2+). D68 (proton acceptor) is an active-site residue. Residues S69, 149–152 (FGYD), K172, and 177–178 (HR) contribute to the substrate site.

The protein belongs to the HAM1 NTPase family. In terms of assembly, homodimer. The cofactor is Mg(2+).

The catalysed reaction is XTP + H2O = XMP + diphosphate + H(+). The enzyme catalyses dITP + H2O = dIMP + diphosphate + H(+). It catalyses the reaction ITP + H2O = IMP + diphosphate + H(+). Functionally, pyrophosphatase that catalyzes the hydrolysis of nucleoside triphosphates to their monophosphate derivatives, with a high preference for the non-canonical purine nucleotides XTP (xanthosine triphosphate), dITP (deoxyinosine triphosphate) and ITP. Seems to function as a house-cleaning enzyme that removes non-canonical purine nucleotides from the nucleotide pool, thus preventing their incorporation into DNA/RNA and avoiding chromosomal lesions. The sequence is that of dITP/XTP pyrophosphatase from Staphylococcus aureus (strain COL).